A 226-amino-acid chain; its full sequence is 3-dehydroquinate dehydratase (226 aa).

3-dehydroquinate contacts are provided by residues 30 to 32 and arginine 62; that span reads EWR. Histidine 118 serves as the catalytic Proton donor/acceptor. Lysine 143 serves as the catalytic Schiff-base intermediate with substrate. Positions 186, 205, and 209 each coordinate 3-dehydroquinate.

The protein belongs to the type-I 3-dehydroquinase family. As to quaternary structure, homodimer.

The catalysed reaction is 3-dehydroquinate = 3-dehydroshikimate + H2O. It functions in the pathway metabolic intermediate biosynthesis; chorismate biosynthesis; chorismate from D-erythrose 4-phosphate and phosphoenolpyruvate: step 3/7. In terms of biological role, involved in the third step of the chorismate pathway, which leads to the biosynthesis of aromatic amino acids. Catalyzes the cis-dehydration of 3-dehydroquinate (DHQ) and introduces the first double bond of the aromatic ring to yield 3-dehydroshikimate. This is 3-dehydroquinate dehydratase from Streptococcus equi subsp. zooepidemicus (strain H70).